Consider the following 194-residue polypeptide: Large ribosomal subunit protein eL15 (194 aa).

Residues 160 to 194 are disordered; sequence RGLTSAGKKGRGLMYKGKGAEKVRPSVRANSKKAK.

It belongs to the eukaryotic ribosomal protein eL15 family.

The protein is Large ribosomal subunit protein eL15 of Methanococcus maripaludis (strain C6 / ATCC BAA-1332).